The sequence spans 325 residues: MASPIVDCTPYRDELLALASELPEVPRADLHGFLDEAKTLAARLPEGLAAALDTFNAVGSEDGYLLLRGLPVDDSELPETPTSTPAPLDRKRLVMEAMRALAGRRLGLHTGYQELRSGTVYHDVYPSPGAHYLSSETSETLLEFHTEMAYHILQPNYVMLACSRADHENRAETLVGSVRKALPLLDEKTRARLFDRKVPCCVDVAFRGGVDDPGAIANVKPLYGDANDPFLGYDRELLAPEDPADKEAVAHLSQALDDVTVGVKLVPGDVLIIDNFRTTHARTPFSPRWDGKDRWLHRVYIRTDRNGELSGGERAGDTISFSPRR.

Fe cation-binding residues include His145, Glu147, and His280. Arg294 lines the 2-oxoglutarate pocket.

It belongs to the clavaminate synthase family. Fe(2+) is required as a cofactor.

The catalysed reaction is deoxyamidinoproclavaminate + 2-oxoglutarate + O2 = amidinoproclavaminate + succinate + CO2. It catalyses the reaction proclavaminate + 2-oxoglutarate + O2 = dihydroclavaminate + succinate + CO2 + H2O. The enzyme catalyses dihydroclavaminate + 2-oxoglutarate + O2 = clavaminate + succinate + CO2 + H2O. Its pathway is antibiotic biosynthesis; clavulanate biosynthesis; clavulanate from D-glyceraldehyde 3-phosphate and L-arginine: step 3/8. It functions in the pathway antibiotic biosynthesis; clavulanate biosynthesis; clavulanate from D-glyceraldehyde 3-phosphate and L-arginine: step 5/8. The protein operates within antibiotic biosynthesis; clavulanate biosynthesis; clavulanate from D-glyceraldehyde 3-phosphate and L-arginine: step 6/8. The chain is Clavaminate synthase 2 (cs2) from Streptomyces clavuligerus.